We begin with the raw amino-acid sequence, 117 residues long: Transcription elongation factor A protein-like 8 (117 aa).

2 stretches are compositionally biased toward basic and acidic residues: residues 1-10 (MQKSCEENEG) and 61-75 (FKED…PEEM). The disordered stretch occupies residues 1–75 (MQKSCEENEG…PVRHLDPEEM (75 aa)). Residues 73-100 (EEMIRGVDELERLREEIRRVRNKFVMMH) adopt a coiled-coil conformation.

Belongs to the TFS-II family. TFA subfamily.

The protein localises to the nucleus. In terms of biological role, may be involved in transcriptional regulation. This is Transcription elongation factor A protein-like 8 (TCEAL8) from Homo sapiens (Human).